Here is a 137-residue protein sequence, read N- to C-terminus: MKPPAAQGSPAAAAAAAPALDSAAAEDLSDALCEFDAVLADFASPFHERHFHYEEHLERMKRRSSASVSDSSGFSDSESADSLYRNSFSFSDEKLNSPTDSTPALLSATVTPQKAKLGDTKELEAFIADLDKTLASM.

Disordered regions lie at residues 1–20 and 57–80; these read MKPPAAQGSPAAAAAAAPAL and LERMKRRSSASVSDSSGFSDSESA. The span at 65–80 shows a compositional bias: low complexity; it reads SASVSDSSGFSDSESA. Ser-67, Ser-69, Ser-71, Ser-75, Ser-91, and Ser-97 each carry phosphoserine. Thr-111 is subject to Phosphothreonine; by CDK1.

As to quaternary structure, interacts with SMAD3. Interacts with CDK1 and PLK1. In terms of tissue distribution, detected in brain, heart and liver (at protein level). Highly expressed in liver, skeletal muscle, kidney and pancreas. Detected at lower levels in heart, brain and placenta. Detected in aorta endothelial cells. Overexpressed in colon, breast, prostate, bladder, lung, and ovarian cancer tissues.

The protein localises to the cytoplasm. The protein resides in the nucleus. It is found in the cytoskeleton. Its subcellular location is the microtubule organizing center. It localises to the centrosome. In terms of biological role, modulates the activity of cell cycle-specific kinases. Enhances CDK1 activity. May contribute to the regulation of the cell cycle. May inhibit growth of glioma cells by promoting arrest of mitotic progression at the G2/M transition. Fibrogenic factor contributing to the pathogenesis of renal fibrosis through fibroblast activation. The sequence is that of Regulator of cell cycle RGCC (RGCC) from Homo sapiens (Human).